The sequence spans 149 residues: Calmodulin (149 aa).

Ala2 carries the post-translational modification N-acetylalanine. 4 EF-hand domains span residues 8–43 (EQIA…LGQN), 44–79 (PTEA…KMKD), 81–116 (DSEE…LGEK), and 117–149 (LTDE…MMAK). Ca(2+)-binding residues include Asp21, Asp23, Asp25, Cys27, Glu32, Asp57, Asp59, Asn61, Thr63, Glu68, Asp94, Asp96, Asp98, and Glu105. Lys116 is subject to N6,N6,N6-trimethyllysine. 5 residues coordinate Ca(2+): Asp130, Asp132, Asp134, Gln136, and Glu141.

Belongs to the calmodulin family.

Functionally, calmodulin mediates the control of a large number of enzymes, ion channels and other proteins by Ca(2+). Among the enzymes to be stimulated by the calmodulin-Ca(2+) complex are a number of protein kinases and phosphatases. The chain is Calmodulin from Triticum aestivum (Wheat).